The primary structure comprises 332 residues: MSLKDQLIHNVHKEEHSHAHNKISVVGVGAVGMACAISILMKDLADELALVDVVEDKLKGEMLDLQHGSLFLRTPKIVSGKDYSVTAHSKLVIVTAGARQQEGESRLNLVQRNVNIFKVIIPNVVKYSPDCKLLIVSNPVDILTYVAWKISGFPKHRVIGSGCNLDSARFRHLMGERLGIHPLSCHGWIVGEHGDSSVPVWSGVNVAGVSLKALHPDMGTDADKEHWKEVHKQVVDSAYEVIKLKGYTSWAIGLSVADLAETIMKNLRRVHPISTVVKGMHGIKEDVFLSVPCVLGSSGITDVVKMILKPEEEDKLRKSADTLWGIQKELQF.

NAD(+)-binding positions include 29–57 (GAVGMACAISILMKDLADELALVDVVEDK) and Arg-99. 3 residues coordinate substrate: Arg-106, Asn-138, and Arg-169. Asn-138 provides a ligand contact to NAD(+). His-193 acts as the Proton acceptor in catalysis. Substrate is bound at residue Thr-248.

The protein belongs to the LDH/MDH superfamily. LDH family. In terms of assembly, homotetramer.

The protein resides in the cytoplasm. It carries out the reaction (S)-lactate + NAD(+) = pyruvate + NADH + H(+). It functions in the pathway fermentation; pyruvate fermentation to lactate; (S)-lactate from pyruvate: step 1/1. Its function is as follows. Interconverts simultaneously and stereospecifically pyruvate and lactate with concomitant interconversion of NADH and NAD(+). The sequence is that of L-lactate dehydrogenase A chain (LDHA) from Columba livia (Rock dove).